Here is a 1195-residue protein sequence, read N- to C-terminus: Zinc finger and BTB domain-containing protein 38 (1195 aa).

The 68-residue stretch at 33–100 folds into the BTB domain; it reads CDVTIIVEDT…IYSSTVVVKR (68 aa). Lys-43 participates in a covalent cross-link: Glycyl lysine isopeptide (Lys-Gly) (interchain with G-Cter in SUMO2). Ser-130 bears the Phosphoserine mark. Residues Lys-145, Lys-148, Lys-151, and Lys-259 each participate in a glycyl lysine isopeptide (Lys-Gly) (interchain with G-Cter in SUMO2) cross-link. The interval 264–334 is disordered; sequence RKPKTFSIPQ…QSSDVPGPPA (71 aa). Over residues 270–280 the composition is skewed to polar residues; that stretch reads SIPQDSDSATE. Positions 300 to 523 are interaction with CBFA2T3; that stretch reads PAAVLTRSKS…RRYQCIFCLE (224 aa). Residue Ser-309 is modified to Phosphoserine. Over residues 314–323 the composition is skewed to basic and acidic residues; sequence GDVHFSREDE. The C2H2-type 1 zinc-finger motif lies at 342 to 364; the sequence is YNCSCCSKAFDSSTLLSAHMQLH. Residues 371-395 form a C2H2-type 2; degenerate zinc finger; sequence LVCKYCNKQFTTLNRLDRHEQICMR. 3 C2H2-type zinc fingers span residues 460 to 482, 488 to 510, and 516 to 539; these read YSCV…ANVH, YPCH…EIWH, and YQCI…KSFH. Glycyl lysine isopeptide (Lys-Gly) (interchain with G-Cter in SUMO2) cross-links involve residues Lys-550, Lys-557, Lys-754, Lys-758, Lys-763, Lys-804, Lys-814, Lys-821, Lys-842, Lys-850, and Lys-857. The tract at residues 745 to 804 is disordered; sequence SDPAVSQSLKDDSKPEPDKVGRFASRPKSIKEKKKTTSHTRGEIPEESNYVADPGGSLSK. Basic and acidic residues predominate over residues 753–765; sequence LKDDSKPEPDKVG. Disordered stretches follow at residues 871-891 and 903-922; these read QEEP…PLGL and FDDA…YYNY. Glycyl lysine isopeptide (Lys-Gly) (interchain with G-Cter in SUMO2) cross-links involve residues Lys-923, Lys-964, Lys-969, Lys-977, Lys-981, Lys-991, Lys-1017, and Lys-1026. 5 consecutive C2H2-type zinc fingers follow at residues 1010–1032, 1038–1060, 1066–1088, 1094–1116, and 1125–1147; these read YACE…MRCH, YQCK…ERIH, FVCQ…ERIH, YHCQ…EQRH, and YACF…QKKH. Residues Lys-1109, Lys-1132, Lys-1135, Lys-1150, and Lys-1183 each participate in a glycyl lysine isopeptide (Lys-Gly) (interchain with G-Cter in SUMO2) cross-link.

Interacts with CBFA2T3. Interacts with ZBTB4. Interacts with RBBP6. In terms of processing, ubiquitinated by RBBP6; leading to its degradation by the proteasome.

It localises to the nucleus. It is found in the chromosome. Functionally, transcriptional regulator with bimodal DNA-binding specificity. Binds with a higher affinity to methylated CpG dinucleotides in the consensus sequence 5'-CGCG-3' but can also bind to E-box elements (5'-CACGTG-3'). Can also bind specifically to a single methyl-CpG pair. Represses transcription in a methyl-CpG-dependent manner. Plays an important role in regulating DNA replication and common fragile sites (CFS) stability in a RBBP6- and MCM10-dependent manner; represses expression of MCM10 which plays an important role in DNA-replication. Acts as a transcriptional activator. May be involved in the differentiation and/or survival of late postmitotic neurons. This Homo sapiens (Human) protein is Zinc finger and BTB domain-containing protein 38.